The primary structure comprises 675 residues: Polyamine deacetylase HDAC10 (675 aa).

Aspartate 22 serves as a coordination point for substrate. The short motif at 23–26 (PACE) is the Substrate specificity element. Residue aspartate 94 participates in substrate binding. The active-site Proton donor/acceptor is the histidine 137. Zn(2+) contacts are provided by aspartate 174, histidine 176, and aspartate 267. Residue tyrosine 307 coordinates substrate. The tract at residues 362 to 399 (LAQSETNPKRPRLDATNGGPKESSEPASESNPKKTAQD) is disordered.

This sequence belongs to the histone deacetylase family. HD type 2 subfamily.

The protein localises to the cytoplasm. It localises to the nucleus. The catalysed reaction is N(8)-acetylspermidine + H2O = spermidine + acetate. The enzyme catalyses N-acetylputrescine + H2O = putrescine + acetate. It catalyses the reaction N-acetylcadaverine + H2O = cadaverine + acetate. Polyamine deacetylase (PDAC), which acts preferentially on N(8)-acetylspermidine, and also on acetylcadaverine and acetylputrescine. Exhibits attenuated catalytic activity toward N(1),N(8)-diacetylspermidine and very low activity, if any, toward N(1)-acetylspermidine. Has a very weak lysine deacetylase, if any. In Danio rerio (Zebrafish), this protein is Polyamine deacetylase HDAC10 (hdac10).